A 152-amino-acid chain; its full sequence is Putative aryl-alcohol dehydrogenase YFL057C (152 aa).

This sequence belongs to the aldo/keto reductase family. Aldo/keto reductase 2 subfamily.

Functionally, putative aryl-alcohol dehydrogenase. In Saccharomyces cerevisiae (strain ATCC 204508 / S288c) (Baker's yeast), this protein is Putative aryl-alcohol dehydrogenase YFL057C.